The chain runs to 187 residues: Plasmodium-specific hydrophobic abundant protein (187 aa).

An N-terminal signal peptide occupies residues 1–18 (MMKYVFVALCLFAVVALA).

This sequence to HAP-S protein.

It is found in the membrane. The polypeptide is Plasmodium-specific hydrophobic abundant protein (Physarum polycephalum (Slime mold)).